The sequence spans 140 residues: Putative pre-16S rRNA nuclease (140 aa).

This sequence belongs to the YqgF nuclease family.

It is found in the cytoplasm. In terms of biological role, could be a nuclease involved in processing of the 5'-end of pre-16S rRNA. The protein is Putative pre-16S rRNA nuclease of Yersinia enterocolitica serotype O:8 / biotype 1B (strain NCTC 13174 / 8081).